Reading from the N-terminus, the 386-residue chain is Succinate--CoA ligase [ADP-forming] subunit beta (386 aa).

Residues 9–244 (KELLREFGVA…TTEEDPREVE (236 aa)) enclose the ATP-grasp domain. ATP is bound by residues Lys46, 53-55 (GRG), Glu99, Ser102, and Glu107. Mg(2+)-binding residues include Asn199 and Asp213. Substrate contacts are provided by residues Asn264 and 321 to 323 (GIM).

The protein belongs to the succinate/malate CoA ligase beta subunit family. As to quaternary structure, heterotetramer of two alpha and two beta subunits. Requires Mg(2+) as cofactor.

The enzyme catalyses succinate + ATP + CoA = succinyl-CoA + ADP + phosphate. The catalysed reaction is GTP + succinate + CoA = succinyl-CoA + GDP + phosphate. It functions in the pathway carbohydrate metabolism; tricarboxylic acid cycle; succinate from succinyl-CoA (ligase route): step 1/1. In terms of biological role, succinyl-CoA synthetase functions in the citric acid cycle (TCA), coupling the hydrolysis of succinyl-CoA to the synthesis of either ATP or GTP and thus represents the only step of substrate-level phosphorylation in the TCA. The beta subunit provides nucleotide specificity of the enzyme and binds the substrate succinate, while the binding sites for coenzyme A and phosphate are found in the alpha subunit. The protein is Succinate--CoA ligase [ADP-forming] subunit beta of Exiguobacterium sp. (strain ATCC BAA-1283 / AT1b).